The chain runs to 106 residues: Cytochrome c (106 aa).

Residues Cys17, Cys20, and His21 each contribute to the heme c site. At Lys75 the chain carries N6,N6,N6-trimethyllysine. Met83 is a binding site for heme c.

Belongs to the cytochrome c family. Post-translationally, binds 1 heme c group covalently per subunit.

It localises to the mitochondrion intermembrane space. Its function is as follows. Electron carrier protein. The oxidized form of the cytochrome c heme group can accept an electron from the heme group of the cytochrome c1 subunit of cytochrome reductase. Cytochrome c then transfers this electron to the cytochrome oxidase complex, the final protein carrier in the mitochondrial electron-transport chain. This Gibberella zeae (strain ATCC MYA-4620 / CBS 123657 / FGSC 9075 / NRRL 31084 / PH-1) (Wheat head blight fungus) protein is Cytochrome c (CYC1).